The following is a 223-amino-acid chain: Probable GTP-binding protein EngB (223 aa).

One can recognise an EngB-type G domain in the interval 25–199; that stretch reads TGVEIAFAGR…SRLLQDWFDE (175 aa). GTP contacts are provided by residues 33–40, 60–64, 78–81, 145–148, and 178–180; these read GRSNAGKS, GRTQH, DLPG, TKAD, and FSS. S40 and T62 together coordinate Mg(2+).

It belongs to the TRAFAC class TrmE-Era-EngA-EngB-Septin-like GTPase superfamily. EngB GTPase family. It depends on Mg(2+) as a cofactor.

Its function is as follows. Necessary for normal cell division and for the maintenance of normal septation. This is Probable GTP-binding protein EngB from Nitrosomonas eutropha (strain DSM 101675 / C91 / Nm57).